Consider the following 215-residue polypeptide: Orotate phosphoribosyltransferase (215 aa).

Residue lysine 26 coordinates 5-phospho-alpha-D-ribose 1-diphosphate. Position 34–35 (34–35 (FF)) interacts with orotate. 5-phospho-alpha-D-ribose 1-diphosphate-binding positions include 72-73 (YK), arginine 99, lysine 100, lysine 103, histidine 105, and 124-132 (DDVITAGTA). Residues threonine 128 and arginine 156 each contribute to the orotate site.

It belongs to the purine/pyrimidine phosphoribosyltransferase family. PyrE subfamily. In terms of assembly, homodimer. Mg(2+) serves as cofactor.

The enzyme catalyses orotidine 5'-phosphate + diphosphate = orotate + 5-phospho-alpha-D-ribose 1-diphosphate. It functions in the pathway pyrimidine metabolism; UMP biosynthesis via de novo pathway; UMP from orotate: step 1/2. In terms of biological role, catalyzes the transfer of a ribosyl phosphate group from 5-phosphoribose 1-diphosphate to orotate, leading to the formation of orotidine monophosphate (OMP). The protein is Orotate phosphoribosyltransferase of Yersinia pseudotuberculosis serotype O:1b (strain IP 31758).